The chain runs to 284 residues: Pantothenate synthetase (284 aa).

30–37 serves as a coordination point for ATP; sequence MGNLHDGH. H37 (proton donor) is an active-site residue. (R)-pantoate is bound at residue Q61. Q61 provides a ligand contact to beta-alanine. Residue 149–152 coordinates ATP; it reads GEKD. A (R)-pantoate-binding site is contributed by Q155. ATP is bound by residues I178 and 186–189; that span reads LSSR.

It belongs to the pantothenate synthetase family. Homodimer.

The protein localises to the cytoplasm. The enzyme catalyses (R)-pantoate + beta-alanine + ATP = (R)-pantothenate + AMP + diphosphate + H(+). The protein operates within cofactor biosynthesis; (R)-pantothenate biosynthesis; (R)-pantothenate from (R)-pantoate and beta-alanine: step 1/1. Catalyzes the condensation of pantoate with beta-alanine in an ATP-dependent reaction via a pantoyl-adenylate intermediate. The chain is Pantothenate synthetase from Salmonella heidelberg (strain SL476).